A 336-amino-acid chain; its full sequence is Dihydroorotate dehydrogenase (quinone) (336 aa).

Residues 62 to 66 (AGLDK) and Thr-86 contribute to the FMN site. Lys-66 is a substrate binding site. 111–115 (NRMGF) lines the substrate pocket. Asn-139 and Asn-172 together coordinate FMN. Asn-172 contacts substrate. The active-site Nucleophile is Ser-175. Asn-177 provides a ligand contact to substrate. 2 residues coordinate FMN: Lys-217 and Thr-245. Substrate is bound at residue 246–247 (NT). FMN is bound by residues Gly-268, Gly-297, and 318 to 319 (YS).

Belongs to the dihydroorotate dehydrogenase family. Type 2 subfamily. Monomer. The cofactor is FMN.

It is found in the cell membrane. It carries out the reaction (S)-dihydroorotate + a quinone = orotate + a quinol. The protein operates within pyrimidine metabolism; UMP biosynthesis via de novo pathway; orotate from (S)-dihydroorotate (quinone route): step 1/1. In terms of biological role, catalyzes the conversion of dihydroorotate to orotate with quinone as electron acceptor. The sequence is that of Dihydroorotate dehydrogenase (quinone) from Salmonella typhi.